The sequence spans 246 residues: Bis(5'-nucleosyl)-tetraphosphatase PrpE [asymmetrical] (246 aa).

Belongs to the PrpE family. Ni(2+) serves as cofactor.

It carries out the reaction P(1),P(4)-bis(5'-guanosyl) tetraphosphate + H2O = GMP + GTP + 2 H(+). In terms of biological role, asymmetrically hydrolyzes Ap4p to yield AMP and ATP. This is Bis(5'-nucleosyl)-tetraphosphatase PrpE [asymmetrical] from Halalkalibacterium halodurans (strain ATCC BAA-125 / DSM 18197 / FERM 7344 / JCM 9153 / C-125) (Bacillus halodurans).